The following is a 306-amino-acid chain: Ribonuclease Z (306 aa).

Zn(2+) contacts are provided by His63, His65, Asp67, His68, His141, Asp211, and His269. Asp67 acts as the Proton acceptor in catalysis.

The protein belongs to the RNase Z family. Homodimer. The cofactor is Zn(2+).

It carries out the reaction Endonucleolytic cleavage of RNA, removing extra 3' nucleotides from tRNA precursor, generating 3' termini of tRNAs. A 3'-hydroxy group is left at the tRNA terminus and a 5'-phosphoryl group is left at the trailer molecule.. Zinc phosphodiesterase, which displays some tRNA 3'-processing endonuclease activity. Probably involved in tRNA maturation, by removing a 3'-trailer from precursor tRNA. The chain is Ribonuclease Z from Staphylococcus aureus (strain USA300).